A 198-amino-acid chain; its full sequence is Glycerol-3-phosphate acyltransferase 2 (198 aa).

4 consecutive transmembrane segments (helical) span residues 4 to 24, 71 to 91, 113 to 133, and 147 to 167; these read TYLLFIVAYLLGSIPFALVVG, LPMVFGLDIHPLWFGLAAVLG, LLCYSPVVFAILAVVFFTLLF, and VVAVIASIVSGDKIFIIAMCL.

The protein belongs to the PlsY family. In terms of assembly, probably interacts with PlsX.

The protein resides in the cell membrane. It carries out the reaction an acyl phosphate + sn-glycerol 3-phosphate = a 1-acyl-sn-glycero-3-phosphate + phosphate. Its pathway is lipid metabolism; phospholipid metabolism. In terms of biological role, catalyzes the transfer of an acyl group from acyl-phosphate (acyl-PO(4)) to glycerol-3-phosphate (G3P) to form lysophosphatidic acid (LPA). This enzyme utilizes acyl-phosphate as fatty acyl donor, but not acyl-CoA or acyl-ACP. The chain is Glycerol-3-phosphate acyltransferase 2 from Bacillus cereus (strain ZK / E33L).